The primary structure comprises 36 residues: Cytochrome b6-f complex subunit 5 (36 aa).

Residues 5–25 (LLSGIVLGLIPITILGLLMAA) traverse the membrane as a helical segment.

The protein belongs to the PetG family. In terms of assembly, the 4 large subunits of the cytochrome b6-f complex are cytochrome b6, subunit IV (17 kDa polypeptide, PetD), cytochrome f and the Rieske protein, while the 4 small subunits are PetG, PetL, PetM and PetN. The complex functions as a dimer.

The protein localises to the plastid. Its subcellular location is the chloroplast thylakoid membrane. In terms of biological role, component of the cytochrome b6-f complex, which mediates electron transfer between photosystem II (PSII) and photosystem I (PSI), cyclic electron flow around PSI, and state transitions. PetG is required for either the stability or assembly of the cytochrome b6-f complex. This chain is Cytochrome b6-f complex subunit 5, found in Cyanidioschyzon merolae (strain NIES-3377 / 10D) (Unicellular red alga).